Consider the following 301-residue polypeptide: tRNA dimethylallyltransferase (301 aa).

ATP is bound at residue 9-16 (GPTASGKS). 11 to 16 (TASGKS) is a substrate binding site. Positions 34–37 (DSMQ) are interaction with substrate tRNA.

This sequence belongs to the IPP transferase family. Monomer. Mg(2+) is required as a cofactor.

It carries out the reaction adenosine(37) in tRNA + dimethylallyl diphosphate = N(6)-dimethylallyladenosine(37) in tRNA + diphosphate. Its function is as follows. Catalyzes the transfer of a dimethylallyl group onto the adenine at position 37 in tRNAs that read codons beginning with uridine, leading to the formation of N6-(dimethylallyl)adenosine (i(6)A). The chain is tRNA dimethylallyltransferase from Corynebacterium efficiens (strain DSM 44549 / YS-314 / AJ 12310 / JCM 11189 / NBRC 100395).